The following is a 95-amino-acid chain: MKITREQVEHVARLARLELSEAELDTFTGQMDSILSYVEKLNALDTEGIVPTSHAVPMENAFRADEATGSIGVEAALANAPLRAQSFFRVPKVIE.

This sequence belongs to the GatC family. In terms of assembly, heterotrimer of A, B and C subunits.

It carries out the reaction L-glutamyl-tRNA(Gln) + L-glutamine + ATP + H2O = L-glutaminyl-tRNA(Gln) + L-glutamate + ADP + phosphate + H(+). The enzyme catalyses L-aspartyl-tRNA(Asn) + L-glutamine + ATP + H2O = L-asparaginyl-tRNA(Asn) + L-glutamate + ADP + phosphate + 2 H(+). In terms of biological role, allows the formation of correctly charged Asn-tRNA(Asn) or Gln-tRNA(Gln) through the transamidation of misacylated Asp-tRNA(Asn) or Glu-tRNA(Gln) in organisms which lack either or both of asparaginyl-tRNA or glutaminyl-tRNA synthetases. The reaction takes place in the presence of glutamine and ATP through an activated phospho-Asp-tRNA(Asn) or phospho-Glu-tRNA(Gln). The polypeptide is Aspartyl/glutamyl-tRNA(Asn/Gln) amidotransferase subunit C (Citrifermentans bemidjiense (strain ATCC BAA-1014 / DSM 16622 / JCM 12645 / Bem) (Geobacter bemidjiensis)).